Reading from the N-terminus, the 459-residue chain is GTPase Der (459 aa).

2 consecutive EngA-type G domains span residues 3-167 (FTLA…PEPV) and 188-363 (IRVA…AVWN). Residues 9-16 (GRPNVGKS), 56-60 (DTAGL), 119-122 (NKSE), 194-201 (GRPNAGKS), 241-245 (DTAGL), and 306-309 (NKWD) contribute to the GTP site. Residues 364–448 (RRVPTAALNR…PVRITLREKA (85 aa)) enclose the KH-like domain.

Belongs to the TRAFAC class TrmE-Era-EngA-EngB-Septin-like GTPase superfamily. EngA (Der) GTPase family. In terms of assembly, associates with the 50S ribosomal subunit.

Functionally, GTPase that plays an essential role in the late steps of ribosome biogenesis. The sequence is that of GTPase Der from Rhodopseudomonas palustris (strain TIE-1).